A 619-amino-acid polypeptide reads, in one-letter code: Secretogranin-2 (619 aa).

Positions 1-30 are cleaved as a signal peptide; sequence MTESKAYRFGAVLLLIHLIFLVPGTEAASF. A Sulfotyrosine modification is found at Tyr-153. Phosphoserine is present on residues Ser-176 and Ser-270. A disordered region spans residues 247-307; it reads VGGEDWSPME…RKESKDQLSE (61 aa). Basic and acidic residues-rich tracts occupy residues 255-286 and 295-307; these read MEEK…EMKR and EGNR…QLSE. Ser-434, Ser-534, Ser-557, and Ser-558 each carry phosphoserine.

It belongs to the chromogranin/secretogranin protein family. As to quaternary structure, interacts with Secretogranin III/SCG3. Brain. Expression in the pituitary is restricted to the anterior lobe. Expression in the hypothalamus is observed in the neuronal cells and neurons of arcuate nucleus, supraoptic nucleus and median eminence (at protein level).

The protein resides in the secreted. Its function is as follows. Neuroendocrine protein of the granin family that regulates the biogenesis of secretory granules. This is Secretogranin-2 (Scg2) from Rattus norvegicus (Rat).